A 216-amino-acid polypeptide reads, in one-letter code: 3-isopropylmalate dehydratase small subunit (216 aa).

The protein belongs to the LeuD family. LeuD type 1 subfamily. In terms of assembly, heterodimer of LeuC and LeuD.

The enzyme catalyses (2R,3S)-3-isopropylmalate = (2S)-2-isopropylmalate. Its pathway is amino-acid biosynthesis; L-leucine biosynthesis; L-leucine from 3-methyl-2-oxobutanoate: step 2/4. Catalyzes the isomerization between 2-isopropylmalate and 3-isopropylmalate, via the formation of 2-isopropylmaleate. The protein is 3-isopropylmalate dehydratase small subunit of Burkholderia mallei (strain NCTC 10247).